The following is a 673-amino-acid chain: DNA ligase (673 aa).

NAD(+) contacts are provided by residues 33 to 37 (DYEYD), 82 to 83 (SL), and glutamate 113. Lysine 115 serves as the catalytic N6-AMP-lysine intermediate. The NAD(+) site is built by arginine 136, glutamate 170, lysine 285, and lysine 309. Zn(2+) is bound by residues cysteine 403, cysteine 406, cysteine 421, and cysteine 426. Residues 583 to 672 (AKSDILKGYT…SREEAEKILM (90 aa)) form the BRCT domain.

Belongs to the NAD-dependent DNA ligase family. LigA subfamily. Mg(2+) is required as a cofactor. Mn(2+) serves as cofactor.

The enzyme catalyses NAD(+) + (deoxyribonucleotide)n-3'-hydroxyl + 5'-phospho-(deoxyribonucleotide)m = (deoxyribonucleotide)n+m + AMP + beta-nicotinamide D-nucleotide.. DNA ligase that catalyzes the formation of phosphodiester linkages between 5'-phosphoryl and 3'-hydroxyl groups in double-stranded DNA using NAD as a coenzyme and as the energy source for the reaction. It is essential for DNA replication and repair of damaged DNA. The chain is DNA ligase from Caldicellulosiruptor bescii (strain ATCC BAA-1888 / DSM 6725 / KCTC 15123 / Z-1320) (Anaerocellum thermophilum).